The primary structure comprises 253 residues: Retinoic acid early-inducible protein 1-gamma (253 aa).

An N-terminal signal peptide occupies residues M1–G28. The cysteines at positions 37 and 56 are disulfide-linked. N-linked (GlcNAc...) asparagine glycosylation is found at N38, N70, N83, N143, and N156. An intrachain disulfide couples C90 to C190. Residues L198–T230 are disordered. Low complexity predominate over residues S211–S221. The GPI-anchor amidated serine moiety is linked to residue S227. Positions H228–M253 are cleaved as a propeptide — removed in mature form.

It belongs to the NKG2D ligand family. Post-translationally, glycosylated. As to expression, expressed predominantly in embryonic brain.

The protein resides in the cell membrane. In terms of biological role, acts as a ligand for KLRK1. This chain is Retinoic acid early-inducible protein 1-gamma (Raet1c), found in Mus musculus (Mouse).